Here is a 98-residue protein sequence, read N- to C-terminus: Small ribosomal subunit protein uS19 (98 aa).

The protein belongs to the universal ribosomal protein uS19 family.

Protein S19 forms a complex with S13 that binds strongly to the 16S ribosomal RNA. The polypeptide is Small ribosomal subunit protein uS19 (Chlorobaculum tepidum (strain ATCC 49652 / DSM 12025 / NBRC 103806 / TLS) (Chlorobium tepidum)).